The following is a 451-amino-acid chain: tRNA modification GTPase MnmE (451 aa).

3 residues coordinate (6S)-5-formyl-5,6,7,8-tetrahydrofolate: arginine 28, glutamate 85, and lysine 124. The 154-residue stretch at 220 to 373 folds into the TrmE-type G domain; sequence GLYTVLVGPP…LKTRLRTLLL (154 aa). Asparagine 230 contributes to the K(+) binding site. GTP contacts are provided by residues 230–235, 249–255, and 274–277; these read NVGKSS, TDVPGTT, and DTAG. Serine 234 is a binding site for Mg(2+). Positions 249, 251, and 254 each coordinate K(+). Residue threonine 255 participates in Mg(2+) binding. Position 451 (lysine 451) interacts with (6S)-5-formyl-5,6,7,8-tetrahydrofolate.

This sequence belongs to the TRAFAC class TrmE-Era-EngA-EngB-Septin-like GTPase superfamily. TrmE GTPase family. In terms of assembly, homodimer. Heterotetramer of two MnmE and two MnmG subunits. It depends on K(+) as a cofactor.

The protein resides in the cytoplasm. In terms of biological role, exhibits a very high intrinsic GTPase hydrolysis rate. Involved in the addition of a carboxymethylaminomethyl (cmnm) group at the wobble position (U34) of certain tRNAs, forming tRNA-cmnm(5)s(2)U34. In Xylella fastidiosa (strain 9a5c), this protein is tRNA modification GTPase MnmE.